A 291-amino-acid polypeptide reads, in one-letter code: Omega-amidase NIT3 (291 aa).

In terms of domain architecture, CN hydrolase spans I11–P264. Phosphothreonine is present on T34. The active-site Proton acceptor is E53. K128 (proton donor) is an active-site residue. C169 acts as the Nucleophile in catalysis.

Belongs to the carbon-nitrogen hydrolase superfamily. NIT1/NIT2 family. As to quaternary structure, homodimer.

It carries out the reaction a monoamide of a dicarboxylate + H2O = a dicarboxylate + NH4(+). Functionally, possesses omega-amidase activity. The role of omega-amidase is to remove potentially toxic intermediates by converting 2-oxoglutaramate and 2-oxosuccinamate to biologically useful 2-oxoglutarate and oxaloacetate, respectively. In Saccharomyces cerevisiae (strain ATCC 204508 / S288c) (Baker's yeast), this protein is Omega-amidase NIT3 (NIT3).